Here is a 1025-residue protein sequence, read N- to C-terminus: Multidrug resistance protein MdtC (1025 aa).

12 helical membrane-spanning segments follow: residues 3–23 (FFAL…AITL), 333–353 (EVEQ…FLFL), 360–380 (IIPA…MYLC), 387–407 (LSLM…IVVL), 431–451 (VGFT…PLLL), 463–483 (FAVT…TLTP), 528–548 (LVGV…ISIP), 853–873 (VILI…LYES), 875–895 (VHPL…LLAL), 897–917 (LFNA…IGIV), 953–973 (PIMM…LSGG), and 984–1004 (ITIV…TPVV).

It belongs to the resistance-nodulation-cell division (RND) (TC 2.A.6) family. MdtC subfamily. Part of a tripartite efflux system composed of MdtA, MdtB and MdtC. MdtC forms a heteromultimer with MdtB.

The protein localises to the cell inner membrane. In terms of biological role, the MdtABC tripartite complex confers resistance against novobiocin and deoxycholate. This is Multidrug resistance protein MdtC from Escherichia coli (strain SMS-3-5 / SECEC).